We begin with the raw amino-acid sequence, 469 residues long: Putative arginine/ornithine antiporter (469 aa).

12 consecutive transmembrane segments (helical) span residues 8 to 28 (GFWL…IFSL), 44 to 64 (AWLL…HLSI), 90 to 110 (AGFT…VAII), 144 to 164 (LTFA…VASI), 179 to 199 (VLGF…SLFG), 213 to 233 (IGIG…FVGI), 254 to 274 (ITGL…TMGV), 301 to 321 (VIMA…WILL), 347 to 367 (SPVI…FSVI), 375 to 395 (FTFL…VSAI), 417 to 437 (DGLI…TGTA), and 439 to 459 (LTTF…YPFV).

It belongs to the amino acid-polyamine-organocation (APC) superfamily. Basic amino acid/polyamine antiporter (APA) (TC 2.A.3.2) family.

The protein localises to the cell membrane. It catalyses the reaction L-ornithine(in) + L-arginine(out) = L-ornithine(out) + L-arginine(in). Functionally, catalyzes electroneutral exchange between L-arginine and L-ornithine. The protein is Putative arginine/ornithine antiporter (yvsH) of Bacillus subtilis (strain 168).